We begin with the raw amino-acid sequence, 377 residues long: tRNA-specific 2-thiouridylase MnmA (377 aa).

ATP-binding positions include Gly12–Ser19 and Met38. Positions Asn98–Asp100 are interaction with target base in tRNA. Cys103 serves as the catalytic Nucleophile. Cys103 and Cys200 are disulfide-bonded. Gly127 contacts ATP. An interaction with tRNA region spans residues Lys150–Gln152. The Cysteine persulfide intermediate role is filled by Cys200. The interval Arg313 to Tyr314 is interaction with tRNA.

This sequence belongs to the MnmA/TRMU family.

The protein localises to the cytoplasm. The enzyme catalyses S-sulfanyl-L-cysteinyl-[protein] + uridine(34) in tRNA + AH2 + ATP = 2-thiouridine(34) in tRNA + L-cysteinyl-[protein] + A + AMP + diphosphate + H(+). Its function is as follows. Catalyzes the 2-thiolation of uridine at the wobble position (U34) of tRNA, leading to the formation of s(2)U34. The protein is tRNA-specific 2-thiouridylase MnmA of Pediococcus pentosaceus (strain ATCC 25745 / CCUG 21536 / LMG 10740 / 183-1w).